We begin with the raw amino-acid sequence, 828 residues long: Periplasmic nitrate reductase (828 aa).

Residues 1-31 constitute a signal peptide (tat-type signal); that stretch reads MKLSRRSFMKANAVAAAAAAAGLSVPGVARA. The 4Fe-4S Mo/W bis-MGD-type domain maps to 39–95; the sequence is IKWDKAPCRFCGTGCGVLVGTQQGRVVACQGDPDAPVNRGLNCIKGYFLPKIMYGKD. The [4Fe-4S] cluster site is built by Cys-46, Cys-49, Cys-53, and Cys-81. Residues Lys-83, Gln-150, Asn-175, Cys-179, 212–219, 243–247, 262–264, Met-372, Gln-376, Asn-482, 508–509, Lys-531, Asp-558, and 718–727 each bind Mo-bis(molybdopterin guanine dinucleotide); these read WGANMAEM, STYQH, QSD, SD, and TGRVLEHWHT. Substrate is bound at residue Phe-794. Asn-802 and Lys-819 together coordinate Mo-bis(molybdopterin guanine dinucleotide).

Belongs to the prokaryotic molybdopterin-containing oxidoreductase family. NasA/NapA/NarB subfamily. In terms of assembly, component of the periplasmic nitrate reductase NapAB complex composed of NapA and NapB. It depends on [4Fe-4S] cluster as a cofactor. The cofactor is Mo-bis(molybdopterin guanine dinucleotide). In terms of processing, predicted to be exported by the Tat system. The position of the signal peptide cleavage has not been experimentally proven.

It localises to the periplasm. The enzyme catalyses 2 Fe(II)-[cytochrome] + nitrate + 2 H(+) = 2 Fe(III)-[cytochrome] + nitrite + H2O. Functionally, catalytic subunit of the periplasmic nitrate reductase complex NapAB. Receives electrons from NapB and catalyzes the reduction of nitrate to nitrite. The chain is Periplasmic nitrate reductase from Shigella flexneri serotype 5b (strain 8401).